Reading from the N-terminus, the 139-residue chain is Nucleoside diphosphate kinase (139 aa).

6 residues coordinate ATP: Lys10, Phe58, Arg86, Thr92, Arg103, and Asn113. His116 functions as the Pros-phosphohistidine intermediate in the catalytic mechanism.

This sequence belongs to the NDK family. Homotetramer. Mg(2+) is required as a cofactor.

The protein localises to the cytoplasm. The catalysed reaction is a 2'-deoxyribonucleoside 5'-diphosphate + ATP = a 2'-deoxyribonucleoside 5'-triphosphate + ADP. The enzyme catalyses a ribonucleoside 5'-diphosphate + ATP = a ribonucleoside 5'-triphosphate + ADP. Major role in the synthesis of nucleoside triphosphates other than ATP. The ATP gamma phosphate is transferred to the NDP beta phosphate via a ping-pong mechanism, using a phosphorylated active-site intermediate. This is Nucleoside diphosphate kinase from Caulobacter vibrioides (strain ATCC 19089 / CIP 103742 / CB 15) (Caulobacter crescentus).